The primary structure comprises 300 residues: Ribosomal RNA small subunit methyltransferase H (300 aa).

Residues 46–48 (GGH), aspartate 65, phenylalanine 92, aspartate 107, and glutamine 114 contribute to the S-adenosyl-L-methionine site.

It belongs to the methyltransferase superfamily. RsmH family.

It localises to the cytoplasm. The catalysed reaction is cytidine(1402) in 16S rRNA + S-adenosyl-L-methionine = N(4)-methylcytidine(1402) in 16S rRNA + S-adenosyl-L-homocysteine + H(+). Its function is as follows. Specifically methylates the N4 position of cytidine in position 1402 (C1402) of 16S rRNA. The sequence is that of Ribosomal RNA small subunit methyltransferase H from Prochlorococcus marinus (strain MIT 9515).